Here is a 391-residue protein sequence, read N- to C-terminus: MIEAKTDPMIVSMGPHHPSMHGVLRLIVTLDGENVLDCEPVVGYLHRGMEKIAENRTIVQYLPYVTRWDYLATMFTEAITVNAPERLANIEVPRRASYLRVIMLELSRIASHLLWLGPFMADLGAQTPFFYILREREMIYDLFEAATGMRMMHNYFRVGGVAADVPYGWIDKCLDFCEYFLPKVDEYEALITRNPIFLKRVKGVGTISPQQAINWGLSGPMLRASGVSWDLRKVDRYECYEDFHWSVESEETGDCLARYLVRIREMRTSTKIVQQALKSIPGGPTENLEARQLSQGRTSPWNEFDYQFLGKKASPTFKMPRQEHYVRVEAPKGELGVFLIGDDHVFPWRWKIRPPGFINVQILPNLVQGMKLADIMTILGSIDIIMGEVDR.

Belongs to the complex I 49 kDa subunit family. In terms of assembly, NDH is composed of at least 16 different subunits, 5 of which are encoded in the nucleus.

It is found in the plastid. The protein resides in the chloroplast thylakoid membrane. The catalysed reaction is a plastoquinone + NADH + (n+1) H(+)(in) = a plastoquinol + NAD(+) + n H(+)(out). It carries out the reaction a plastoquinone + NADPH + (n+1) H(+)(in) = a plastoquinol + NADP(+) + n H(+)(out). Functionally, NDH shuttles electrons from NAD(P)H:plastoquinone, via FMN and iron-sulfur (Fe-S) centers, to quinones in the photosynthetic chain and possibly in a chloroplast respiratory chain. The immediate electron acceptor for the enzyme in this species is believed to be plastoquinone. Couples the redox reaction to proton translocation, and thus conserves the redox energy in a proton gradient. This Nephroselmis olivacea (Green alga) protein is NAD(P)H-quinone oxidoreductase subunit H, chloroplastic.